We begin with the raw amino-acid sequence, 227 residues long: Uracil phosphoribosyltransferase (227 aa).

Lysine 36 to lysine 40 contacts GTP. Residues arginine 86, arginine 111, and aspartate 145 to threonine 153 each bind 5-phospho-alpha-D-ribose 1-diphosphate. Uracil is bound by residues isoleucine 212 and glycine 217–alanine 219. Aspartate 218 contributes to the 5-phospho-alpha-D-ribose 1-diphosphate binding site.

It belongs to the UPRTase family. The cofactor is Mg(2+).

It carries out the reaction UMP + diphosphate = 5-phospho-alpha-D-ribose 1-diphosphate + uracil. Its pathway is pyrimidine metabolism; UMP biosynthesis via salvage pathway; UMP from uracil: step 1/1. Its activity is regulated as follows. Allosterically activated by GTP. In terms of biological role, catalyzes the conversion of uracil and 5-phospho-alpha-D-ribose 1-diphosphate (PRPP) to UMP and diphosphate. This is Uracil phosphoribosyltransferase from Halobacterium salinarum (strain ATCC 700922 / JCM 11081 / NRC-1) (Halobacterium halobium).